The following is a 441-amino-acid chain: Rho-associated protein kinase 1 (441 aa).

The stretch at 1-99 forms a coiled coil; that stretch reads NSKSQMDKDY…RLEQEVNEHK (99 aa). The tract at residues 114-353 is SHROOM3 binding; the sequence is EAKSVAMCEM…TLSRLEETNS (240 aa). Positions 356-422 constitute a RhoBD domain; the sequence is TKDIELLRKE…LAEIMNRKDF (67 aa). Residues 418–441 adopt a coiled-coil conformation; it reads NRKDFKIDRKKANTQDLRKKKKKK.

The protein belongs to the protein kinase superfamily. AGC Ser/Thr protein kinase family. In terms of assembly, homodimer. Interacts with RHOA (activated by GTP), RHOB, RHOC, GEM, MYLC2B, RHOE, PPP1R12A, LIMK1, LIMK2, TSG101, CHORDC1, DAPK3, PFN1, PTEN and JIP3. Interacts with FHOD1 in a Src-dependent manner. Interacts with ITGB1BP1 (via N-terminus and PTB domain). Interacts with SHROOM3. It depends on Mg(2+) as a cofactor.

The protein resides in the cytoplasm. It is found in the golgi apparatus membrane. The protein localises to the cytoskeleton. Its subcellular location is the microtubule organizing center. It localises to the centrosome. The protein resides in the centriole. It is found in the cell projection. The protein localises to the bleb. Its subcellular location is the cell membrane. It localises to the lamellipodium. The protein resides in the ruffle. It catalyses the reaction L-seryl-[protein] + ATP = O-phospho-L-seryl-[protein] + ADP + H(+). The catalysed reaction is L-threonyl-[protein] + ATP = O-phospho-L-threonyl-[protein] + ADP + H(+). Activated by RHOA binding. Inhibited by Y-27632. Its function is as follows. Protein kinase which is a key regulator of the actin cytoskeleton and cell polarity. Involved in regulation of smooth muscle contraction, actin cytoskeleton organization, stress fiber and focal adhesion formation, neurite retraction, cell adhesion and motility via phosphorylation of DAPK3, GFAP, LIMK1, LIMK2, MYL9/MLC2, TPPP, PFN1 and PPP1R12A. Phosphorylates FHOD1 and acts synergistically with it to promote SRC-dependent non-apoptotic plasma membrane blebbing. Phosphorylates JIP3 and regulates the recruitment of JNK to JIP3 upon UVB-induced stress. Acts as a suppressor of inflammatory cell migration by regulating PTEN phosphorylation and stability. Acts as a negative regulator of VEGF-induced angiogenic endothelial cell activation. Required for centrosome positioning and centrosome-dependent exit from mitosis. Plays a role in terminal erythroid differentiation. Inhibits podocyte motility via regulation of actin cytoskeletal dynamics and phosphorylation of CFL1. Promotes keratinocyte terminal differentiation. Involved in osteoblast compaction through the fibronectin fibrillogenesis cell-mediated matrix assembly process, essential for osteoblast mineralization. May regulate closure of the eyelids and ventral body wall by inducing the assembly of actomyosin bundles. The sequence is that of Rho-associated protein kinase 1 (ROCK1) from Bos taurus (Bovine).